The sequence spans 93 residues: Pyrimidine/purine nucleoside phosphorylase (93 aa).

This sequence belongs to the nucleoside phosphorylase PpnP family.

It catalyses the reaction a purine D-ribonucleoside + phosphate = a purine nucleobase + alpha-D-ribose 1-phosphate. The catalysed reaction is adenosine + phosphate = alpha-D-ribose 1-phosphate + adenine. It carries out the reaction cytidine + phosphate = cytosine + alpha-D-ribose 1-phosphate. The enzyme catalyses guanosine + phosphate = alpha-D-ribose 1-phosphate + guanine. It catalyses the reaction inosine + phosphate = alpha-D-ribose 1-phosphate + hypoxanthine. The catalysed reaction is thymidine + phosphate = 2-deoxy-alpha-D-ribose 1-phosphate + thymine. It carries out the reaction uridine + phosphate = alpha-D-ribose 1-phosphate + uracil. The enzyme catalyses xanthosine + phosphate = alpha-D-ribose 1-phosphate + xanthine. Catalyzes the phosphorolysis of diverse nucleosides, yielding D-ribose 1-phosphate and the respective free bases. Can use uridine, adenosine, guanosine, cytidine, thymidine, inosine and xanthosine as substrates. Also catalyzes the reverse reactions. This chain is Pyrimidine/purine nucleoside phosphorylase, found in Magnetococcus marinus (strain ATCC BAA-1437 / JCM 17883 / MC-1).